The sequence spans 293 residues: Ribulose bisphosphate carboxylase/oxygenase activase, chloroplastic (293 aa).

An ATP-binding site is contributed by proline 75–valine 82.

Belongs to the CbxX/CfxQ family. In terms of assembly, forms homooligomers. Forms heterohexameric rings with the nuclear-encoded Rca subunit consisting of 3 of each nuclear- and plastidial-encoded subunits that alternate in the ring.

The protein localises to the plastid. Its subcellular location is the chloroplast. In terms of biological role, required for the expression of ribulose 1,5-bisphosphate carboxylase/oxygenase (RuBisCo). ATPase involved in the activation of red-type RuBisCo, which tends to form inactive complexes with its substrate ribulose 1,5-bisphosphate (RuBP). Catalyzes the release of RuBP from inhibited RuBisCo in an ATP-dependent manner. Activation of RuBisCO involves the ATP-dependent carboxylation of the epsilon-amino group of lysine leading to a carbamate structure. The nuclear-encoded subunit plays a more critical role in activase function than the plastidial-encoded subunit. This chain is Ribulose bisphosphate carboxylase/oxygenase activase, chloroplastic, found in Cyanidioschyzon merolae (strain NIES-3377 / 10D) (Unicellular red alga).